Reading from the N-terminus, the 65-residue chain is Large ribosomal subunit protein bL28 (65 aa).

Residues 1–21 (MAKKDQLTLRGPLYGNNRSHS) form a disordered region.

This sequence belongs to the bacterial ribosomal protein bL28 family.

The polypeptide is Large ribosomal subunit protein bL28 (Mycoplasma pneumoniae (strain ATCC 29342 / M129 / Subtype 1) (Mycoplasmoides pneumoniae)).